Here is a 301-residue protein sequence, read N- to C-terminus: Transcription elongation factor A protein 1 (301 aa).

Position 1 is an N-acetylmethionine (Met-1). Residues 3–80 (DEVVRIAKKM…KSWKKLLDGP (78 aa)) enclose the TFIIS N-terminal domain. Lys-55 is covalently cross-linked (Glycyl lysine isopeptide (Lys-Gly) (interchain with G-Cter in ubiquitin)). Residues Ser-57, Ser-81, Ser-97, and Ser-100 each carry the phosphoserine modification. Residues 76-93 (LLDGPSTDKDPEEKKKEP) are compositionally biased toward basic and acidic residues. Positions 76–139 (LLDGPSTDKD…FPRAPSTSDS (64 aa)) are disordered. The region spanning 140–256 (VRLKCREMLA…EHQMAKTGGT (117 aa)) is the TFIIS central domain. The TFIIS-type zinc finger occupies 259–299 (DLFTCGKCKKKNCTYTQVQTRSADEPMTTFVVCNECGNRWK). Zn(2+) is bound by residues Cys-263, Cys-266, Cys-291, and Cys-294.

The protein belongs to the TFS-II family. Interacts with EAF2. Associates with UBR5 and forms a transcription regulatory complex made of CDK9, Pol II, UBR5 and TCEA1/TFIIS. Part of TBP-based Pol II pre-initiation complex (PIC), in which Pol II core assembles with general transcription factors and other specific initiation factors including GTF2E1, GTF2E2, GTF2F1, GTF2F2, TCEA1, ERCC2, ERCC3, GTF2H2, GTF2H3, GTF2H4, GTF2H5, GTF2A1, GTF2A2, GTF2B and TBP; this large multi-subunit PIC complex mediates DNA unwinding and targets Pol II core to the transcription start site where the first phosphodiester bond forms.

The protein resides in the nucleus. Functionally, necessary for efficient RNA polymerase II transcription elongation past template-encoded arresting sites. The arresting sites in DNA have the property of trapping a certain fraction of elongating RNA polymerases that pass through, resulting in locked ternary complexes. Cleavage of the nascent transcript by S-II allows the resumption of elongation from the new 3'-terminus. This Mus musculus (Mouse) protein is Transcription elongation factor A protein 1 (Tcea1).